Consider the following 517-residue polypeptide: Pentatricopeptide repeat-containing protein At1g77360, mitochondrial (517 aa).

A mitochondrion-targeting transit peptide spans 1-59; it reads MKRFRIRSVDFRQLVNFFSFMRWECSSSATVWVRFNMTIRIINRQSRFCCKSFLSARLY. PPR repeat units lie at residues 133-163, 167-201, 202-232, 236-270, 271-305, 306-340, 341-375, 376-406, 410-444, and 445-479; these read SVRA…MRKK, NVET…DLPP, NLVA…MRDR, DSKT…GCHP, DIVT…ICKP, TTFI…GMKA, DVAV…GVTP, NSKS…MIKV, DADT…GVFP, and SMHT…GIRP.

This sequence belongs to the PPR family. P subfamily.

It is found in the mitochondrion. In Arabidopsis thaliana (Mouse-ear cress), this protein is Pentatricopeptide repeat-containing protein At1g77360, mitochondrial.